We begin with the raw amino-acid sequence, 72 residues long: Translation initiation factor IF-1 (72 aa).

The region spanning 1–72 (MARDDVIEVD…DKGRITFRYK (72 aa)) is the S1-like domain.

The protein belongs to the IF-1 family. As to quaternary structure, component of the 30S ribosomal translation pre-initiation complex which assembles on the 30S ribosome in the order IF-2 and IF-3, IF-1 and N-formylmethionyl-tRNA(fMet); mRNA recruitment can occur at any time during PIC assembly.

Its subcellular location is the cytoplasm. One of the essential components for the initiation of protein synthesis. Stabilizes the binding of IF-2 and IF-3 on the 30S subunit to which N-formylmethionyl-tRNA(fMet) subsequently binds. Helps modulate mRNA selection, yielding the 30S pre-initiation complex (PIC). Upon addition of the 50S ribosomal subunit IF-1, IF-2 and IF-3 are released leaving the mature 70S translation initiation complex. This Helicobacter pylori (strain HPAG1) protein is Translation initiation factor IF-1.